The chain runs to 100 residues: Putative pterin-4-alpha-carbinolamine dehydratase (100 aa).

It belongs to the pterin-4-alpha-carbinolamine dehydratase family.

It carries out the reaction (4aS,6R)-4a-hydroxy-L-erythro-5,6,7,8-tetrahydrobiopterin = (6R)-L-erythro-6,7-dihydrobiopterin + H2O. The sequence is that of Putative pterin-4-alpha-carbinolamine dehydratase from Rhodopseudomonas palustris (strain TIE-1).